A 1158-amino-acid polypeptide reads, in one-letter code: ATP-dependent helicase/deoxyribonuclease subunit B (1158 aa).

Residue 8 to 15 participates in ATP binding; that stretch reads GRAGTGKS. Positions 791, 1112, 1115, and 1121 each coordinate [4Fe-4S] cluster.

Belongs to the helicase family. AddB/RexB type 1 subfamily. As to quaternary structure, heterodimer of AddA and AddB. The cofactor is Mg(2+). [4Fe-4S] cluster serves as cofactor.

Its function is as follows. The heterodimer acts as both an ATP-dependent DNA helicase and an ATP-dependent, dual-direction single-stranded exonuclease. Recognizes the chi site generating a DNA molecule suitable for the initiation of homologous recombination. The AddB subunit has 5' -&gt; 3' nuclease activity but not helicase activity. In Clostridium perfringens (strain 13 / Type A), this protein is ATP-dependent helicase/deoxyribonuclease subunit B.